Consider the following 166-residue polypeptide: EEF1A lysine methyltransferase 1 (166 aa).

The protein belongs to the class I-like SAM-binding methyltransferase superfamily. EFM5 family.

Its subcellular location is the cytoplasm. It carries out the reaction L-lysyl-[protein] + 3 S-adenosyl-L-methionine = N(6),N(6),N(6)-trimethyl-L-lysyl-[protein] + 3 S-adenosyl-L-homocysteine + 3 H(+). Functionally, protein-lysine methyltransferase that selectively catalyzes the trimethylation of EEF1A at 'Lys-79'. The sequence is that of EEF1A lysine methyltransferase 1 from Danio rerio (Zebrafish).